Consider the following 294-residue polypeptide: Methionine aminopeptidase (294 aa).

Residue His65 participates in substrate binding. Residues Asp85, Asp96, and His156 each coordinate a divalent metal cation. Position 164 (His164) interacts with substrate. Residues Glu189 and Glu279 each contribute to the a divalent metal cation site.

This sequence belongs to the peptidase M24A family. Methionine aminopeptidase archaeal type 2 subfamily. As to quaternary structure, monomer. Requires Co(2+) as cofactor. Zn(2+) serves as cofactor. Mn(2+) is required as a cofactor. The cofactor is Fe(2+).

It carries out the reaction Release of N-terminal amino acids, preferentially methionine, from peptides and arylamides.. Functionally, removes the N-terminal methionine from nascent proteins. The N-terminal methionine is often cleaved when the second residue in the primary sequence is small and uncharged (Met-Ala-, Cys, Gly, Pro, Ser, Thr, or Val). The sequence is that of Methionine aminopeptidase from Methanocaldococcus jannaschii (strain ATCC 43067 / DSM 2661 / JAL-1 / JCM 10045 / NBRC 100440) (Methanococcus jannaschii).